The primary structure comprises 418 residues: ML-236A carboxylate methylbutanoyltransferase mlcH (418 aa).

Arginine 78 is a monacolin J binding site. Serine 81 functions as the Acyl-ester intermediate in the catalytic mechanism. The monacolin J site is built by arginine 178, tyrosine 193, and tyrosine 262. A 2-methylbutanoate-binding site is contributed by glycine 370.

Belongs to the class-A beta-lactamase family.

The enzyme catalyses ML-236A carboxylate + (S)-2-methylbutanoyl-[2-methylbutanoate polyketide synthase] = mevinic carboxylate + holo-[2-methylbutanoate polyketide synthase]. Its pathway is polyketide biosynthesis. Functionally, compactin diketide synthase; part of the gene cluster that mediates the biosynthesis of compactin, also known as mevastatin or ML-236B, and which acts as a potent competitive inhibitor of HMG-CoA reductase. Compactin biosynthesis is performed in two stages. The first stage is catalyzed by the nonaketide synthase mlcA, which belongs to type I polyketide synthases and catalyzes the iterative nine-step formation of the polyketide. This PKS stage is completed by the action of dehydrogenase mlcG, which catalyzes the NADPH-dependent reduction of the unsaturated tetra-, penta- and heptaketide intermediates that arise during the mlcA-mediated biosynthesis of the nonaketide chain and leads to dihydro-ML-236C carboxylate. Covalently bound dihydro-ML-236C carboxylate is released from mlcA by the mlcF esterase. Conversion of dihydro-ML-236C carboxylate into ML-236A carboxylate is subsequently performed with the participation of molecular oxygen and P450 monoogygenase mlcC. Finally, mlcH performs the conversion of ML-236A carboxylate to ML-236B/compactin carboxylate through the addition of the side-chain diketide moiety produced by the diketide synthase mlcB. This chain is ML-236A carboxylate methylbutanoyltransferase mlcH, found in Penicillium citrinum.